Here is a 142-residue protein sequence, read N- to C-terminus: Large ribosomal subunit protein uL13 (142 aa).

The protein belongs to the universal ribosomal protein uL13 family. Part of the 50S ribosomal subunit.

In terms of biological role, this protein is one of the early assembly proteins of the 50S ribosomal subunit, although it is not seen to bind rRNA by itself. It is important during the early stages of 50S assembly. This chain is Large ribosomal subunit protein uL13, found in Opitutus terrae (strain DSM 11246 / JCM 15787 / PB90-1).